Reading from the N-terminus, the 559-residue chain is Protein NRT1/ PTR FAMILY 2.8 (559 aa).

11 helical membrane-spanning segments follow: residues 57–77 (GVFL…LTLA), 92–112 (LLLG…TAAL), 132–152 (KWQL…AGGV), 178–198 (FFNW…TGVV), 206–226 (WVIG…TFVI), 321–341 (LKCV…FILT), 374–394 (VSMI…IPIV), 404–424 (LTLK…VAGF), 437–457 (GSFV…LAGL), 481–501 (VAGA…TLLI), and 529–549 (YFFI…LFAS).

It belongs to the major facilitator superfamily. Proton-dependent oligopeptide transporter (POT/PTR) (TC 2.A.17) family. In terms of tissue distribution, expressed in flowers.

The protein localises to the membrane. The polypeptide is Protein NRT1/ PTR FAMILY 2.8 (NPF2.8) (Arabidopsis thaliana (Mouse-ear cress)).